Here is a 547-residue protein sequence, read N- to C-terminus: Chaperonin GroEL (547 aa).

ATP-binding positions include 30–33, 87–91, glycine 414, 478–480, and aspartate 494; these read TLGP, DGTTT, and DAL.

Belongs to the chaperonin (HSP60) family. As to quaternary structure, forms a cylinder of 14 subunits composed of two heptameric rings stacked back-to-back. Interacts with the co-chaperonin GroES.

It localises to the cytoplasm. The enzyme catalyses ATP + H2O + a folded polypeptide = ADP + phosphate + an unfolded polypeptide.. In terms of biological role, together with its co-chaperonin GroES, plays an essential role in assisting protein folding. The GroEL-GroES system forms a nano-cage that allows encapsulation of the non-native substrate proteins and provides a physical environment optimized to promote and accelerate protein folding. The sequence is that of Chaperonin GroEL from Desulforudis audaxviator (strain MP104C).